The chain runs to 454 residues: Bifunctional protein GlmU (454 aa).

Residues 1–232 are pyrophosphorylase; the sequence is MTDRTCLSIV…VDNVIGINNR (232 aa). UDP-N-acetyl-alpha-D-glucosamine-binding positions include 11–14, Lys25, Gln78, and 83–84; these read LAAG and GT. Asp108 is a binding site for Mg(2+). Residues Gly144, Glu158, Asn173, and Asn230 each contribute to the UDP-N-acetyl-alpha-D-glucosamine site. Position 230 (Asn230) interacts with Mg(2+). The linker stretch occupies residues 233 to 253; the sequence is AELAEAETIWQNRKRRELMLS. The segment at 254 to 454 is N-acetyltransferase; sequence GVTLIAPETV…AIKAAKSVSK (201 aa). UDP-N-acetyl-alpha-D-glucosamine is bound by residues Arg319 and Lys337. The active-site Proton acceptor is the His349. UDP-N-acetyl-alpha-D-glucosamine contacts are provided by Tyr352 and Asn363. Acetyl-CoA contacts are provided by residues Ala366, 372 to 373, Ser391, Ser409, and Arg426; that span reads NY.

This sequence in the N-terminal section; belongs to the N-acetylglucosamine-1-phosphate uridyltransferase family. The protein in the C-terminal section; belongs to the transferase hexapeptide repeat family. As to quaternary structure, homotrimer. Requires Mg(2+) as cofactor.

The protein localises to the cytoplasm. The catalysed reaction is alpha-D-glucosamine 1-phosphate + acetyl-CoA = N-acetyl-alpha-D-glucosamine 1-phosphate + CoA + H(+). It carries out the reaction N-acetyl-alpha-D-glucosamine 1-phosphate + UTP + H(+) = UDP-N-acetyl-alpha-D-glucosamine + diphosphate. Its pathway is nucleotide-sugar biosynthesis; UDP-N-acetyl-alpha-D-glucosamine biosynthesis; N-acetyl-alpha-D-glucosamine 1-phosphate from alpha-D-glucosamine 6-phosphate (route II): step 2/2. The protein operates within nucleotide-sugar biosynthesis; UDP-N-acetyl-alpha-D-glucosamine biosynthesis; UDP-N-acetyl-alpha-D-glucosamine from N-acetyl-alpha-D-glucosamine 1-phosphate: step 1/1. It functions in the pathway bacterial outer membrane biogenesis; LPS lipid A biosynthesis. Its function is as follows. Catalyzes the last two sequential reactions in the de novo biosynthetic pathway for UDP-N-acetylglucosamine (UDP-GlcNAc). The C-terminal domain catalyzes the transfer of acetyl group from acetyl coenzyme A to glucosamine-1-phosphate (GlcN-1-P) to produce N-acetylglucosamine-1-phosphate (GlcNAc-1-P), which is converted into UDP-GlcNAc by the transfer of uridine 5-monophosphate (from uridine 5-triphosphate), a reaction catalyzed by the N-terminal domain. The protein is Bifunctional protein GlmU of Brucella melitensis biotype 1 (strain ATCC 23456 / CCUG 17765 / NCTC 10094 / 16M).